Consider the following 207-residue polypeptide: Ribosomal RNA small subunit methyltransferase G (207 aa).

S-adenosyl-L-methionine is bound by residues G73, L78, 124–125 (VE), and R139.

Belongs to the methyltransferase superfamily. RNA methyltransferase RsmG family.

It localises to the cytoplasm. The enzyme catalyses guanosine(527) in 16S rRNA + S-adenosyl-L-methionine = N(7)-methylguanosine(527) in 16S rRNA + S-adenosyl-L-homocysteine. Its function is as follows. Specifically methylates the N7 position of guanine in position 527 of 16S rRNA. This Salmonella choleraesuis (strain SC-B67) protein is Ribosomal RNA small subunit methyltransferase G.